The sequence spans 278 residues: tRNA (guanine-N(7)-)-methyltransferase (278 aa).

The segment at 1–42 (MRHDGPMHVQPGVGLQSDTSSSTGTGSGPADEPEAEKSAWGY) is disordered. 4 residues coordinate S-adenosyl-L-methionine: Glu106, Glu131, Asn160, and Asp183. Asp183 is an active-site residue. Residues Lys187, Asp219, and 256–259 (TKYE) each bind substrate.

It belongs to the class I-like SAM-binding methyltransferase superfamily. TrmB family.

It catalyses the reaction guanosine(46) in tRNA + S-adenosyl-L-methionine = N(7)-methylguanosine(46) in tRNA + S-adenosyl-L-homocysteine. It participates in tRNA modification; N(7)-methylguanine-tRNA biosynthesis. In terms of biological role, catalyzes the formation of N(7)-methylguanine at position 46 (m7G46) in tRNA. This Mycobacterium ulcerans (strain Agy99) protein is tRNA (guanine-N(7)-)-methyltransferase.